The sequence spans 291 residues: Potassium-transporting ATPase subunit beta (291 aa).

The Cytoplasmic portion of the chain corresponds to 1–36 (MAALQEKKSCSQRMEEFRHYCWNPDTGQMLGRTLSR). A helical; Signal-anchor for type II membrane protein transmembrane segment spans residues 37–57 (WVWISLYYVAFYVVMTGLFAL). Residues 58-291 (CIYVLMQTID…KVEFKLKIQK (234 aa)) lie on the Extracellular side of the membrane. 5 N-linked (GlcNAc...) asparagine glycosylation sites follow: Asn99, Asn103, Asn130, Asn146, and Asn161. A disulfide bond links Cys131 and Cys152. A disulfide bridge links Cys162 with Cys178. Asn193 and Asn222 each carry an N-linked (GlcNAc...) asparagine glycan. Residues 194-291 (STPPRVDCTF…KVEFKLKIQK (98 aa)) are immunoglobulin-like. Cys201 and Cys263 are oxidised to a cystine.

This sequence belongs to the X(+)/potassium ATPases subunit beta family. The ATPase pump is composed of two subunits: alpha (catalytic) and beta (regulatory). Interacts with alpha subunit ATP12A; this interaction is required for the formation of a functionally active pump and targeting at the plasma membrane. Interacts (via N-terminus) with alpha subunit ATP4A (via the P-domain). In terms of processing, N-glycosylation is necessary for assembly and functional expression of the pump at the plasma membrane.

Its subcellular location is the apical cell membrane. The protein localises to the cell membrane. Functionally, the beta subunit of the gastric H(+)/K(+) ATPase pump which transports H(+) ions in exchange for K(+) ions across the apical membrane of parietal cells. Plays a structural and regulatory role in the assembly and membrane targeting of a functionally active pump. Within a transport cycle, the transfer of a H(+) ion across the membrane is coupled to ATP hydrolysis and is associated with a transient phosphorylation of the alpha subunit that shifts the pump conformation from inward-facing (E1) to outward-facing state (E2). Interacts with the phosphorylation domain of the alpha subunit and functions as a ratchet, stabilizing the lumenal-open E2 conformation and preventing the reverse reaction of the transport cycle. This chain is Potassium-transporting ATPase subunit beta (ATP4B), found in Oryctolagus cuniculus (Rabbit).